An 815-amino-acid polypeptide reads, in one-letter code: Serotype-specific mannosyltransferase WbdA (815 aa).

The tract at residues 1 to 374 (MSRAIIENAG…WANTAHLAIE (374 aa)) is alpha-(1-&gt;2)-mannosyltransferase. The segment at 431-804 (KLLVDISVLA…WKQSAEFLLK (374 aa)) is alpha-(1-&gt;3)-mannosyltransferase.

It belongs to the glycosyltransferase group 1 family. Glycosyltransferase 4 subfamily. Monomer. Interacts with the C-terminal region of WbdD.

Its subcellular location is the cell inner membrane. It carries out the reaction [alpha-D-Man-(1-&gt;3)-alpha-D-Man-(1-&gt;3)-alpha-D-Man-(1-&gt;2)-alpha-D-Man-(1-&gt;2)](n)-alpha-D-Man-(1-&gt;3)-alpha-D-Man-(1-&gt;3)-alpha-D-Man-(1-&gt;3)-alpha-D-GlcNAc-di-trans,octa-cis-undecaprenyl diphosphate + 2 GDP-alpha-D-mannose = alpha-D-Man-(1-&gt;2)-alpha-D-Man-(1-&gt;2)-[alpha-D-Man-(1-&gt;3)-alpha-D-Man-(1-&gt;3)-alpha-D-Man-(1-&gt;2)-alpha-D-Man-(1-&gt;2)](n)-alpha-D-Man-(1-&gt;3)-alpha-D-Man-(1-&gt;3)-alpha-D-Man-(1-&gt;3)-alpha-D-GlcNAc-di-trans,octa-cis-undecaprenyl diphosphate + 2 GDP + 2 H(+). The catalysed reaction is alpha-D-Man-(1-&gt;2)-alpha-D-Man-(1-&gt;2)-[alpha-D-Man-(1-&gt;3)-alpha-D-Man-(1-&gt;3)-alpha-D-Man-(1-&gt;2)-alpha-D-Man-(1-&gt;2)](n)-alpha-D-Man-(1-&gt;3)-alpha-D-Man-(1-&gt;3)-alpha-D-Man-(1-&gt;3)-alpha-D-GlcNAc-di-trans,octa-cis-undecaprenyl diphosphate + 2 GDP-alpha-D-mannose = [alpha-D-Man-(1-&gt;3)-alpha-D-Man-(1-&gt;3)-alpha-D-Man-(1-&gt;2)-alpha-D-Man-(1-&gt;2)](n+1)-alpha-D-Man-(1-&gt;3)-alpha-D-Man-(1-&gt;3)-alpha-D-Man-(1-&gt;3)-alpha-D-GlcNAc-di-trans,octa-cis-undecaprenyl diphosphate + 2 GDP + 2 H(+). It participates in bacterial outer membrane biogenesis; LPS O-antigen biosynthesis. In terms of biological role, mannosyltransferase involved in the biosynthesis of the repeat unit of the lipopolysaccharide (LPS) O-antigen region. Catalyzes the polymerization of a tetrasaccharide repeat unit containing two alpha-(1-&gt;3)- and two alpha-(1-&gt;2)-linked mannopyranose residues. This is Serotype-specific mannosyltransferase WbdA from Escherichia coli.